A 100-amino-acid chain; its full sequence is Small ribosomal subunit protein uS14c (100 aa).

It belongs to the universal ribosomal protein uS14 family. In terms of assembly, part of the 30S ribosomal subunit.

The protein resides in the plastid. Its subcellular location is the chloroplast. In terms of biological role, binds 16S rRNA, required for the assembly of 30S particles. In Arabis hirsuta (Hairy rock-cress), this protein is Small ribosomal subunit protein uS14c.